We begin with the raw amino-acid sequence, 162 residues long: Interleukin-15 (162 aa).

Positions 1 to 29 are cleaved as a signal peptide; it reads MRISKPHLRSISIQCYLCLLLKSHFLTEA. A propeptide spanning residues 30–48 is cleaved from the precursor; it reads GIHVFILGCFSAGLPKTEA. 2 disulfide bridges follow: Cys-83–Cys-133 and Cys-90–Cys-136. Asn-127 carries an N-linked (GlcNAc...) asparagine glycan.

Belongs to the IL-15/IL-21 family.

It localises to the secreted. Its function is as follows. Cytokine that plays a major role in the development of inflammatory and protective immune responses to microbial invaders and parasites by modulating immune cells of both the innate and adaptive immune systems. Stimulates the proliferation of natural killer cells, T-cells and B-cells and promotes the secretion of several cytokines. In monocytes, induces the production of IL8 and monocyte chemotactic protein 1/CCL2, two chemokines that attract neutrophils and monocytes respectively to sites of infection. Unlike most cytokines, which are secreted in soluble form, IL15 is expressed in association with its high affinity IL15RA on the surface of IL15-producing cells and delivers signals to target cells that express IL2RB and IL2RG receptor subunits. Binding to its receptor triggers the phosphorylation of JAK1 and JAK3 and the recruitment and subsequent phosphorylation of signal transducer and activator of transcription-3/STAT3 and STAT5. In mast cells, induces the rapid tyrosine phosphorylation of STAT6 and thereby controls mast cell survival and release of cytokines such as IL4. This is Interleukin-15 (IL15) from Chlorocebus aethiops (Green monkey).